Reading from the N-terminus, the 217-residue chain is Adenylate kinase (217 aa).

Position 10–15 (10–15 (GAGKGT)) interacts with ATP. An NMP region spans residues 30 to 59 (STGDMLRAAVKAGTPLGLQAKDIMASGGLV). AMP is bound by residues T31, R36, 57 to 59 (GLV), 85 to 88 (GFPR), and Q92. The tract at residues 122 to 159 (GRRVHEASGRVYHIIHNAPRVEGHDDVTGEPLVQRPDD) is LID. ATP-binding positions include R123 and 132–133 (VY). Positions 156 and 167 each coordinate AMP. G203 is an ATP binding site.

Belongs to the adenylate kinase family. As to quaternary structure, monomer.

It localises to the cytoplasm. The enzyme catalyses AMP + ATP = 2 ADP. It functions in the pathway purine metabolism; AMP biosynthesis via salvage pathway; AMP from ADP: step 1/1. In terms of biological role, catalyzes the reversible transfer of the terminal phosphate group between ATP and AMP. Plays an important role in cellular energy homeostasis and in adenine nucleotide metabolism. This is Adenylate kinase from Cellvibrio japonicus (strain Ueda107) (Pseudomonas fluorescens subsp. cellulosa).